Consider the following 283-residue polypeptide: Thymidylate synthase (283 aa).

R22 lines the dUMP pocket. The Nucleophile role is filled by C160. Residues R180–D183, N191, and H221–Y223 contribute to the dUMP site. D183 lines the (6R)-5,10-methylene-5,6,7,8-tetrahydrofolate pocket. A (6R)-5,10-methylene-5,6,7,8-tetrahydrofolate-binding site is contributed by S282.

The protein belongs to the thymidylate synthase family. Bacterial-type ThyA subfamily. Homodimer.

It is found in the cytoplasm. The catalysed reaction is dUMP + (6R)-5,10-methylene-5,6,7,8-tetrahydrofolate = 7,8-dihydrofolate + dTMP. It participates in pyrimidine metabolism; dTTP biosynthesis. Functionally, catalyzes the reductive methylation of 2'-deoxyuridine-5'-monophosphate (dUMP) to 2'-deoxythymidine-5'-monophosphate (dTMP) while utilizing 5,10-methylenetetrahydrofolate (mTHF) as the methyl donor and reductant in the reaction, yielding dihydrofolate (DHF) as a by-product. This enzymatic reaction provides an intracellular de novo source of dTMP, an essential precursor for DNA biosynthesis. The chain is Thymidylate synthase from Shewanella piezotolerans (strain WP3 / JCM 13877).